The chain runs to 361 residues: Large ribosomal subunit protein uL3 (361 aa).

Residues 1–14 (MGRGGRRNPGRPRR) are compositionally biased toward basic residues. Disordered regions lie at residues 1-33 (MGRGGRRNPGRPRRGSLAFSPRKRASRPVPRIR) and 337-361 (TSQQGVRPKASEDEIVEQLGGPASA).

The protein belongs to the universal ribosomal protein uL3 family. As to quaternary structure, part of the 50S ribosomal subunit. Forms a cluster with proteins L14 and L24e.

In terms of biological role, one of the primary rRNA binding proteins, it binds directly near the 3'-end of the 23S rRNA, where it nucleates assembly of the 50S subunit. The chain is Large ribosomal subunit protein uL3 from Methanopyrus kandleri (strain AV19 / DSM 6324 / JCM 9639 / NBRC 100938).